The following is a 353-amino-acid chain: UPF0283 membrane protein YcjF (353 aa).

The segment covering 1–19 (MSEPLKPRIDFAEPLKEEP) has biased composition (basic and acidic residues). The tract at residues 1–35 (MSEPLKPRIDFAEPLKEEPTSAFKAQQTFSEAESR) is disordered. The next 3 helical transmembrane spans lie at 70 to 90 (MVMG…LQWT), 100 to 120 (VALG…GSVV), and 213 to 233 (ESTL…FIAW).

This sequence belongs to the UPF0283 family.

It is found in the cell inner membrane. The protein is UPF0283 membrane protein YcjF of Salmonella choleraesuis (strain SC-B67).